A 391-amino-acid chain; its full sequence is Paired box protein Pax-5 (391 aa).

The segment at residues 16 to 142 (GHGGVNQLGG…SSINRIIRTK (127 aa)) is a DNA-binding region (paired). The segment at 19-75 (GVNQLGGVFVNGRPLPDVVRQRIVELAHQGVRPCDISRQLRVSHGCVSKILGRYYET) is PAI subdomain. The RED subdomain stretch occupies residues 94–142 (KVVEKIAEYKRQNPTMFAWEIRDRLLAERVCDNDTVPSVSSINRIIRTK). The tract at residues 182 to 218 (SGILGITSPSADTNKRKRDEGIQESPVPNGHSLPGRD) is disordered.

Interacts with ETS1; this interaction alters PAX5 DNA-binding properties. Binds DNA as a monomer. Interacts with TBP; this interaction allows PAX5 to interact with the basal transcription machinery. Interacts with RB1. Interacts with TLE4. Interacts with DAXX. Post-translationally, O-glycosylated. Phosphorylated by SYK. This phosphorylation plays an important role in the abolition of BLIMP1 repression by PAX5 in order to trigger plasma cell differentiation. In terms of tissue distribution, expressed in all B-lymphoid organs, in the embryonic midbrain and in adult testis.

It localises to the nucleus. Its function is as follows. Transcription factor that plays an essential role in commitment of lymphoid progenitors to the B-lymphocyte lineage. Fulfills a dual role by repressing B-lineage inappropriate genes and simultaneously activating B-lineage-specific genes. In turn, regulates cell adhesion and migration, induces V(H)-to-D(H)J(H) recombination, facilitates pre-B-cell receptor signaling and promotes development to the mature B-cell stage. Repression of the cohesin-release factor WAPL causes global changes of the chromosomal architecture in pro-B cells to facilitate the generation of a diverse antibody repertoire. This is Paired box protein Pax-5 (Pax5) from Mus musculus (Mouse).